The primary structure comprises 131 residues: POU domain, class 3, transcription factor 3 (131 aa).

Residues Phe1–Asp60 form the POU-specific domain. The homeobox DNA-binding region spans Lys78–Gln131.

It belongs to the POU transcription factor family. Class-3 subfamily. In terms of assembly, homodimer. Brain.

The protein resides in the nucleus. Transcription factor that acts synergistically with SOX11 and SOX4. Plays a role in neuronal development. Is implicated in an enhancer activity at the embryonic met-mesencephalic junction; the enhancer element contains the octamer motif (5'-ATTTGCAT-3'). This Sus scrofa (Pig) protein is POU domain, class 3, transcription factor 3 (POU3F3).